The chain runs to 120 residues: Phosphoribosyl-AMP cyclohydrolase (120 aa).

Residue Asp74 participates in Mg(2+) binding. Cys75 contributes to the Zn(2+) binding site. Mg(2+)-binding residues include Asp76 and Asp78. 2 residues coordinate Zn(2+): Cys91 and Cys98.

The protein belongs to the PRA-CH family. As to quaternary structure, homodimer. Mg(2+) is required as a cofactor. The cofactor is Zn(2+).

It localises to the cytoplasm. It carries out the reaction 1-(5-phospho-beta-D-ribosyl)-5'-AMP + H2O = 1-(5-phospho-beta-D-ribosyl)-5-[(5-phospho-beta-D-ribosylamino)methylideneamino]imidazole-4-carboxamide. Its pathway is amino-acid biosynthesis; L-histidine biosynthesis; L-histidine from 5-phospho-alpha-D-ribose 1-diphosphate: step 3/9. Functionally, catalyzes the hydrolysis of the adenine ring of phosphoribosyl-AMP. The polypeptide is Phosphoribosyl-AMP cyclohydrolase (Natronomonas pharaonis (strain ATCC 35678 / DSM 2160 / CIP 103997 / JCM 8858 / NBRC 14720 / NCIMB 2260 / Gabara) (Halobacterium pharaonis)).